The following is a 113-amino-acid chain: Iron-sulfur cluster assembly protein CyaY (113 aa).

It belongs to the frataxin family.

Functionally, involved in iron-sulfur (Fe-S) cluster assembly. May act as a regulator of Fe-S biogenesis. This Ralstonia nicotianae (strain ATCC BAA-1114 / GMI1000) (Ralstonia solanacearum) protein is Iron-sulfur cluster assembly protein CyaY.